The primary structure comprises 666 residues: Endogenous retrovirus group K member 10 Gag polyprotein (666 aa).

Residue Gly-2 is the site of N-myristoyl glycine attachment. Residues 164–183 (EGKGPELMGPSESKPRGTSP) form a disordered region. 2 CCHC-type zinc fingers span residues 544–561 (GKCYNCGQIGHLKKNCPV) and 580–597 (DLCPRCKKGKHWASQCRS). The segment at 598 to 642 (KFDKNGQPLSGNEQRGQPQAPQQTGAFPIQPFVPQGFQGQQPPLS) is disordered. A compositionally biased stretch (polar residues) spans 604–622 (QPLSGNEQRGQPQAPQQTG). Residues 624–640 (FPIQPFVPQGFQGQQPP) are compositionally biased toward low complexity.

The protein belongs to the beta type-B retroviral Gag protein family. HERV class-II K(HML-2) gag subfamily. In terms of processing, myristoylation is essential for retroviral assembly. Alteration of the glycine residue leads to a block in the budding of particles and an accumulation of Gag inside the cell. Specific enzymatic cleavages may yield mature proteins.

The protein resides in the cell membrane. Functionally, the products of the Gag polyproteins of infectious retroviruses perform highly complex orchestrated tasks during the assembly, budding, maturation, and infection stages of the viral replication cycle. During viral assembly, the proteins form membrane associations and self-associations that ultimately result in budding of an immature virion from the infected cell. Gag precursors also function during viral assembly to selectively bind and package two plus strands of genomic RNA. Endogenous Gag proteins may have kept, lost or modified their original function during evolution. The chain is Endogenous retrovirus group K member 10 Gag polyprotein (ERVK-10) from Homo sapiens (Human).